The sequence spans 451 residues: Crh-like protein 2 (451 aa).

Positions 1-21 are cleaved as a signal peptide; that stretch reads MQFNSLVLLAGATILSPFVQA. A GH16 domain is found at 22–241; that stretch reads QTWTTCNPLN…FTKVPFTMYV (220 aa). The cysteines at positions 27 and 34 are disulfide-linked. N-linked (GlcNAc...) asparagine glycosylation is found at asparagine 31, asparagine 43, asparagine 49, and asparagine 59. The Nucleophile role is filled by glutamate 121. Glutamate 125 serves as the catalytic Proton donor. Glutamate 125 lines the chitin pocket. 3 N-linked (GlcNAc...) asparagine glycosylation sites follow: asparagine 130, asparagine 143, and asparagine 165. Chitin is bound by residues arginine 206, tryptophan 210, and threonine 222. Asparagine 273 is a glycosylation site (N-linked (GlcNAc...) asparagine). The chain crosses the membrane as a helical span at residues 305-325; sequence VYCGGGAAVAALVSAFLFTFL. A glycan (N-linked (GlcNAc...) asparagine) is linked at asparagine 366.

This sequence belongs to the glycosyl hydrolase 16 family. CRH1 subfamily. As to quaternary structure, forms homodimers as well as heterodimers with other crh protein members crh1 and crh3. Dimerization may be necessary for the transglycosylation activity.

The protein localises to the membrane. The enzyme catalyses Random endo-hydrolysis of N-acetyl-beta-D-glucosaminide (1-&gt;4)-beta-linkages in chitin and chitodextrins.. Its function is as follows. Dual chitinase/transglycosylase that plays a role in cell wall architecture. Chitinase and transglycosylase activities are coupled. Required for the polysaccharide cross-linking at the septa and the cell wall. More specifically, transfers chitin to 1,6-beta-glucan in the cell wall. The chain is Crh-like protein 2 from Botryotinia fuckeliana (strain B05.10) (Noble rot fungus).